Reading from the N-terminus, the 462-residue chain is Argininosuccinate lyase (462 aa).

The protein belongs to the lyase 1 family. Argininosuccinate lyase subfamily.

Its subcellular location is the cytoplasm. The catalysed reaction is 2-(N(omega)-L-arginino)succinate = fumarate + L-arginine. Its pathway is amino-acid biosynthesis; L-arginine biosynthesis; L-arginine from L-ornithine and carbamoyl phosphate: step 3/3. This Bacillus cereus (strain ZK / E33L) protein is Argininosuccinate lyase.